Reading from the N-terminus, the 133-residue chain is Lanmodulin (133 aa).

The N-terminal stretch at 1–21 is a signal peptide; the sequence is MAFRLSSAVLLAALVAAPAYA. Residues D35, D37, D39, T41, E46, D59, D61, D63, T65, E70, D84, D86, D88, T90, E95, N108, D110, D112, T114, and E119 each coordinate Nd(3+). EF-hand domains follow at residues 35 to 46, 59 to 70, 84 to 95, and 108 to 119; these read DPDKDGTIDLKE, DPDKDGTLDAKE, DPDNDGTLDKKE, and NPDNDGTIDARE.

Monomer.

It is found in the periplasm. High-affinity lanthanide (Ln)-binding protein. Shows 100 million-fold selectivity for La(3+) over Ca(2+). Binds 3 equiv of Ln(3+) with picomolar affinity and a fourth with approximately micromolar affinity. May be involved in receiving and then transporting lanthanides (such as La(3+), Nd(3+) and Sm(3+)) to a specific periplasmic destination. This chain is Lanmodulin, found in Methylorubrum extorquens (strain ATCC 14718 / DSM 1338 / JCM 2805 / NCIMB 9133 / AM1) (Methylobacterium extorquens).